Consider the following 318-residue polypeptide: Aspartate carbamoyltransferase catalytic subunit (318 aa).

Residues R67 and T68 each coordinate carbamoyl phosphate. K95 contacts L-aspartate. Carbamoyl phosphate is bound by residues R117, H145, and Q148. L-aspartate contacts are provided by R178 and R236. The carbamoyl phosphate site is built by G277 and P278.

This sequence belongs to the aspartate/ornithine carbamoyltransferase superfamily. ATCase family. As to quaternary structure, heterododecamer (2C3:3R2) of six catalytic PyrB chains organized as two trimers (C3), and six regulatory PyrI chains organized as three dimers (R2).

It carries out the reaction carbamoyl phosphate + L-aspartate = N-carbamoyl-L-aspartate + phosphate + H(+). It participates in pyrimidine metabolism; UMP biosynthesis via de novo pathway; (S)-dihydroorotate from bicarbonate: step 2/3. Catalyzes the condensation of carbamoyl phosphate and aspartate to form carbamoyl aspartate and inorganic phosphate, the committed step in the de novo pyrimidine nucleotide biosynthesis pathway. The chain is Aspartate carbamoyltransferase catalytic subunit from Roseiflexus sp. (strain RS-1).